The sequence spans 370 residues: Flagellar P-ring protein (370 aa).

The N-terminal stretch at 1-24 (MTLSKWILSFGLSVCLIVSHPVSA) is a signal peptide.

The protein belongs to the FlgI family. The basal body constitutes a major portion of the flagellar organelle and consists of four rings (L,P,S, and M) mounted on a central rod.

The protein resides in the periplasm. It localises to the bacterial flagellum basal body. Its function is as follows. Assembles around the rod to form the L-ring and probably protects the motor/basal body from shearing forces during rotation. In Nitrosomonas europaea (strain ATCC 19718 / CIP 103999 / KCTC 2705 / NBRC 14298), this protein is Flagellar P-ring protein.